Reading from the N-terminus, the 632-residue chain is Fem-3 mRNA-binding factor 2 (632 aa).

The span at 1-11 (MDQSKMRRTNQ) shows a compositional bias: basic residues. Residues 1-37 (MDQSKMRRTNQFRKTSQKPPSTGIDSYPTPAQSPMAQ) form a disordered region. Positions 12 to 35 (FRKTSQKPPSTGIDSYPTPAQSPM) are enriched in polar residues. A PUM-HD domain is found at 162–566 (TRSNNVLPTW…KMIETLANLR (405 aa)). Pumilio repeat units lie at residues 187–225 (EVLD…QLFE), 226–264 (QVIG…GYTK), 271–307 (NFIS…KLVQ), 308–332 (ALPR…QKVV), 345–384 (DFVA…DLTS), 400–436 (SVTN…CIIE), 438–473 (CLMR…EMMD), and 484–521 (DTGK…RQTK). The segment at 609-632 (MLEPRSNKSSVSVKFSSSGSHGDD) is disordered. The span at 615-632 (NKSSVSVKFSSSGSHGDD) shows a compositional bias: low complexity.

As to quaternary structure, interacts (via C-terminus) with gld-3 isoform A in an RNA-independent manner. Interacts with dlc-1, and is required for the localization of fbf-2 to P granules. Interacts (via RNA-binding domain) with lst-1, probably displaces bound auto-inhibitory C-terminal tail and alters its RNA-binding affinity. As to expression, expressed specifically in the germline (at protein level).

The protein localises to the cytoplasm. The protein resides in the cytoplasmic granule. RNA-binding protein that binds to the consensus sequence 5'-UGUGCCAUA-3' in mRNA 3'-UTRs. Involved in the control of stem cells and sex determination in the C.elegans hermaphrodite germline. May also play a role in the hermaphrodite germline proliferation and oogenesis. By binding to the 3'-UTR, represses phosphatase lip-1 expression in the distal part of the germline mitotic zone. Binds specifically to the regulatory region of fem-3 3'-UTR and mediates the sperm/oocyte switch. Negatively regulates gld-3 expression possibly by directly binding to two sites within the gld-3 isoform b 3'-UTR. Suppresses germline tumor formation by preventing the dedifferentiation of secondary spermatocytes. C-terminal disordered region probably auto-inhibits RNA binding; auto-inhibition may be reversed by interaction with lst-1. This chain is Fem-3 mRNA-binding factor 2, found in Caenorhabditis elegans.